Reading from the N-terminus, the 340-residue chain is Protein-tyrosine-phosphatase PTP1 (340 aa).

Positions 58 to 326 (IAHEFTGLQA…FFCYNAIVDE (269 aa)) constitute a Tyrosine-protein phosphatase domain. Substrate contacts are provided by residues aspartate 234, 265 to 271 (CSAGIGR), and glutamine 311. Cysteine 265 serves as the catalytic Phosphocysteine intermediate.

As to quaternary structure, interacts with MPK6. Interacts with KIN10. Post-translationally, phosphorylated by KIN10. Expressed in roots, stems and flowers, and at low levels in leaves.

The protein resides in the cytoplasm. The protein localises to the cytosol. Its subcellular location is the nucleus. The enzyme catalyses O-phospho-L-tyrosyl-[protein] + H2O = L-tyrosyl-[protein] + phosphate. Inhibited by hydrogen peroxide. Protein-tyrosine-phosphatase that dephosphorylates and probably inhibits MPK6 in non-oxidative stress conditions. In association with MKP1, represses salicylic acid (SA) and camalexin biosynthesis, thus modulating defense response. May also repress MPK3. Dephosphorylates and inactivates MPK4 in vitro. The chain is Protein-tyrosine-phosphatase PTP1 (PTP1) from Arabidopsis thaliana (Mouse-ear cress).